The chain runs to 217 residues: Probable GTP-binding protein EngB (217 aa).

Positions 37–214 constitute an EngB-type G domain; that stretch reads AGIEVAFAGR…RAAMIRLLDE (178 aa). GTP is bound by residues 45–52, 72–76, 92–95, 159–162, and 193–195; these read GRSNVGKS, GRTQE, DMPG, TKAD, and TSS. Residues serine 52 and threonine 74 each contribute to the Mg(2+) site.

This sequence belongs to the TRAFAC class TrmE-Era-EngA-EngB-Septin-like GTPase superfamily. EngB GTPase family. The cofactor is Mg(2+).

Functionally, necessary for normal cell division and for the maintenance of normal septation. This chain is Probable GTP-binding protein EngB, found in Rhodopseudomonas palustris (strain BisB5).